The primary structure comprises 306 residues: Lipoyl synthase 2 (306 aa).

Residues Cys-49, Cys-54, Cys-60, Cys-75, Cys-79, Cys-82, and Ser-300 each contribute to the [4Fe-4S] cluster site. The region spanning 61-289 (YAAGTATFLL…AEVACKLGFA (229 aa)) is the Radical SAM core domain.

Belongs to the radical SAM superfamily. Lipoyl synthase family. [4Fe-4S] cluster serves as cofactor.

The protein resides in the cytoplasm. It catalyses the reaction [[Fe-S] cluster scaffold protein carrying a second [4Fe-4S](2+) cluster] + N(6)-octanoyl-L-lysyl-[protein] + 2 oxidized [2Fe-2S]-[ferredoxin] + 2 S-adenosyl-L-methionine + 4 H(+) = [[Fe-S] cluster scaffold protein] + N(6)-[(R)-dihydrolipoyl]-L-lysyl-[protein] + 4 Fe(3+) + 2 hydrogen sulfide + 2 5'-deoxyadenosine + 2 L-methionine + 2 reduced [2Fe-2S]-[ferredoxin]. The protein operates within protein modification; protein lipoylation via endogenous pathway; protein N(6)-(lipoyl)lysine from octanoyl-[acyl-carrier-protein]: step 2/2. In terms of biological role, catalyzes the radical-mediated insertion of two sulfur atoms into the C-6 and C-8 positions of the octanoyl moiety bound to the lipoyl domains of lipoate-dependent enzymes, thereby converting the octanoylated domains into lipoylated derivatives. The sequence is that of Lipoyl synthase 2 from Prochlorococcus marinus (strain MIT 9313).